Consider the following 121-residue polypeptide: Flagellar hook-basal body complex protein FliE (121 aa).

This sequence belongs to the FliE family.

It is found in the bacterial flagellum basal body. In Saccharophagus degradans (strain 2-40 / ATCC 43961 / DSM 17024), this protein is Flagellar hook-basal body complex protein FliE.